Consider the following 61-residue polypeptide: Large ribosomal subunit protein eL37 (61 aa).

Zn(2+)-binding residues include Cys19, Cys22, Cys34, and Cys37. Residues 19–37 (CRRCGRNAYNVSKHYCAAC) form a C4-type zinc finger.

Belongs to the eukaryotic ribosomal protein eL37 family. Zn(2+) is required as a cofactor.

Binds to the 23S rRNA. The sequence is that of Large ribosomal subunit protein eL37 (rpl37e) from Saccharolobus solfataricus (strain ATCC 35092 / DSM 1617 / JCM 11322 / P2) (Sulfolobus solfataricus).